The chain runs to 469 residues: Tubulin gamma-2 chain (469 aa).

142-148 (AGGTGSG) lines the GTP pocket.

This sequence belongs to the tubulin family.

The protein localises to the cytoplasm. The protein resides in the cytoskeleton. It is found in the microtubule organizing center. Tubulin is the major constituent of microtubules. The gamma chain is found at microtubule organizing centers (MTOC) such as the spindle poles, suggesting that it is involved in the minus-end nucleation of microtubule assembly. The protein is Tubulin gamma-2 chain (TUBG2) of Zea mays (Maize).